The chain runs to 53 residues: Chlorophyll a-b binding protein 1, chloroplastic (53 aa).

Residue Phe18 coordinates chlorophyll b. Chlorophyll a-binding residues include Glu48 and His51. Position 53 (Arg53) interacts with chlorophyll b.

This sequence belongs to the light-harvesting chlorophyll a/b-binding (LHC) protein family. As to quaternary structure, the LHC complex consists of chlorophyll a-b binding proteins. It depends on Binds at least 14 chlorophylls (8 Chl-a and 6 Chl-b) and carotenoids such as lutein and neoxanthin. as a cofactor. In terms of processing, photoregulated by reversible phosphorylation of its threonine residues.

It localises to the plastid. The protein resides in the chloroplast thylakoid membrane. In terms of biological role, the light-harvesting complex (LHC) functions as a light receptor, it captures and delivers excitation energy to photosystems with which it is closely associated. The protein is Chlorophyll a-b binding protein 1, chloroplastic of Populus euphratica (Euphrates poplar).